Here is a 328-residue protein sequence, read N- to C-terminus: MLEDYYPSTTSYYHSGIDDDLYTAKWGMVMTFLDLNDSSLTPFEGTHFALIGFKSDKGVYINNGRVGAVESPAAIRTQLAKFPWHLGNQVMVYDVGNIDGPNRSLEQLQNSLSKAIKRMCDLNLKPIVLGGGHETAYGHYLGLRQSLSSSDDLAVINMDAHFDLRPYDQTGPNSGTGFRQMFDDAVADKRLFKYFVLGIQEHNNNLFLFDFVAKSKGIQFLTGQDIYQMGHQKVCRAIDRFLEGQERVYLTIDMDCFSVGAAPGVSAIQSLGVDPNLAVLVLQHIAASGKLVGFDVVEVSPPHDIDNHTANLAATFIFYLVQIMAQHN.

Histidine 133, aspartate 159, histidine 161, aspartate 163, aspartate 253, and aspartate 255 together coordinate Mn(2+).

The protein belongs to the arginase family. Mn(2+) is required as a cofactor.

The catalysed reaction is N-formimidoyl-L-glutamate + H2O = formamide + L-glutamate. Its pathway is amino-acid degradation; L-histidine degradation into L-glutamate; L-glutamate from N-formimidoyl-L-glutamate (hydrolase route): step 1/1. Functionally, catalyzes the conversion of N-formimidoyl-L-glutamate to L-glutamate and formamide. The polypeptide is Formimidoylglutamase (Streptococcus pyogenes serotype M3 (strain ATCC BAA-595 / MGAS315)).